We begin with the raw amino-acid sequence, 149 residues long: Transcriptional repressor NrdR (149 aa).

The segment at 3-34 (CPFCTAVDTKVIDSRLVGDGSQVRRRRQCLVC) is a zinc-finger region. The 91-residue stretch at 49-139 (PRVVKSDEIR…VYRSFEDVRD (91 aa)) folds into the ATP-cone domain.

This sequence belongs to the NrdR family. Zn(2+) serves as cofactor.

Negatively regulates transcription of bacterial ribonucleotide reductase nrd genes and operons by binding to NrdR-boxes. This chain is Transcriptional repressor NrdR, found in Proteus mirabilis (strain HI4320).